Here is a 997-residue protein sequence, read N- to C-terminus: Glutamate [NMDA] receptor subunit 1 (997 aa).

The signal sequence occupies residues 1–26 (MAVAEFVFCWPLFELAIVLLVAPIHA). Residues 27–573 (AQRHTASDNP…TLVSFLQPFS (547 aa)) lie on the Extracellular side of the membrane. Residues asparagine 258, asparagine 314, asparagine 345, asparagine 397, asparagine 454, asparagine 481, and asparagine 501 are each glycosylated (N-linked (GlcNAc...) asparagine). Residues 530–532 (PLT) and arginine 537 each bind glycine. A helical membrane pass occupies residues 574 to 594 (NTLWILVMVSVHVVALVLYLL). At 595-651 (DRFSPFGRFKLSHSDSNEEKALNLSSAVWFAWGVLLNSGIGEGTPRSFSARVLGMVW) the chain is on the cytoplasmic side. Residues 652–672 (AGFAMIIVASYTANLAAFLVL) form a helical membrane-spanning segment. The Extracellular segment spans residues 673–831 (ERPKTKLSGI…KTPNTLGLKN (159 aa)). Asparagine 693 carries N-linked (GlcNAc...) asparagine glycosylation. Positions 703 and 747 each coordinate glycine. A helical membrane pass occupies residues 832 to 852 (MAGVFILVGVGIAGGVGLIII). The Cytoplasmic portion of the chain corresponds to 853-997 (EVIYKKHQVK…YTSDVSHLVV (145 aa)). The interval 947–997 (ELGKPGQSPKVMSANQPGMPMPMLGKTRPQQSVLPPRYSPGYTSDVSHLVV) is disordered. Polar residues predominate over residues 987–997 (GYTSDVSHLVV).

The protein belongs to the glutamate-gated ion channel (TC 1.A.10.1) family. Forms a heteromeric NMDA channel with Nmdar2.

The protein resides in the cell membrane. Its subcellular location is the postsynaptic cell membrane. It localises to the postsynaptic density. Functionally, NMDA receptor subtype of glutamate-gated ion channels with high calcium permeability and voltage-dependent sensitivity to magnesium. Mediated by glycine. This protein plays a key role in synaptic plasticity, synaptogenesis, excitotoxicity, memory acquisition and learning. It mediates neuronal functions in glutamate neurotransmission. Is involved in the cell surface targeting of NMDA receptors. Plays a role in associative learning and in long-term memory consolidation. This Drosophila erecta (Fruit fly) protein is Glutamate [NMDA] receptor subunit 1.